Here is a 756-residue protein sequence, read N- to C-terminus: Xylosyl- and glucuronyltransferase LARGE1 (756 aa).

The Cytoplasmic portion of the chain corresponds to 1–10; the sequence is MLGICRGRRK. A helical; Signal-anchor for type II membrane protein membrane pass occupies residues 11-31; that stretch reads FLAASLTLLCIPAITWIYLFA. Residues 32–756 lie on the Lumenal side of the membrane; it reads GSFEDGKPVS…LKYLTAENNS (725 aa). Disordered regions lie at residues 43 to 64 and 82 to 108; these read SPLE…ERES and QLSL…EEGT. Positions 44–58 are enriched in polar residues; the sequence is PLESQAHSPRYTASS. Residues 53–95 are a coiled coil; sequence RYTASSQRERESLEVRVREVEEENRALRRQLSLAQGQSPAHHR. Residues Asn-97, Asn-122, and Asn-148 are each glycosylated (N-linked (GlcNAc...) asparagine). A xylosyltransferase activity region spans residues 138–413; it reads IHVAIVCAGY…FLEYDGNLLR (276 aa). Mn(2+)-binding residues include Asp-242 and Asp-244. N-linked (GlcNAc...) asparagine glycosylation occurs at Asn-272. Residues 414-756 form a glucuronyltransferase activity region; sequence RELFGCPSET…LKYLTAENNS (343 aa). Mn(2+) is bound by residues Asp-563 and Asp-565.

It in the C-terminal section; belongs to the glycosyltransferase 49 family. The protein in the N-terminal section; belongs to the glycosyltransferase 8 family. As to quaternary structure, interacts with DAG1 (via the N-terminal domain of alpha-DAG1); the interaction increases binding of DAG1 to laminin. Interacts with B4GAT1. The cofactor is Mn(2+). As to expression, ubiquitous. Highest expression in heart, diaphragm and brain, where it is especially found in cerebral cortex, hippocampus, and trigeminal ganglion.

The protein localises to the golgi apparatus membrane. The enzyme catalyses 3-O-[beta-D-GlcA-(1-&gt;3)-beta-D-Xyl-(1-&gt;4)-Rib-ol-P-Rib-ol-P-3-beta-D-GalNAc-(1-&gt;3)-beta-D-GlcNAc-(1-&gt;4)-(O-6-P-alpha-D-Man)]-Thr-[protein] + UDP-alpha-D-xylose = 3-O-[alpha-D-Xyl-(1-&gt;3)-beta-D-GlcA-(1-&gt;4)-beta-D-Xyl-(1-&gt;4)-Rib-ol-P-Rib-ol-P-3-beta-D-GalNAc-(1-&gt;3)-beta-D-GlcNAc-(1-&gt;4)-(O-6-P-alpha-D-Man)]-Thr-[protein] + UDP + H(+). It carries out the reaction 3-O-{(1-&gt;[3)-alpha-D-Xyl-(1-&gt;3)-beta-D-GlcA-(1-&gt;](n)-4)-beta-D-Xyl-(1-&gt;4)-Rib-ol-P-Rib-ol-P-3-beta-D-GalNAc-(1-&gt;3)-beta-D-GlcNAc-(1-&gt;4)-O-6-P-alpha-D-Man}-L-Thr-[protein] + UDP-alpha-D-glucuronate = 3-O-{beta-D-GlcA-(1-&gt;[3)-alpha-D-Xyl-(1-&gt;3)-beta-D-GlcA-(1-&gt;](n)-4)-beta-D-Xyl-(1-&gt;4)-Rib-ol-P-Rib-ol-P-3-beta-D-GalNAc-(1-&gt;3)-beta-D-GlcNAc-(1-&gt;4)-O-6-P-alpha-D-Man}-L-Thr-[protein] + UDP + H(+). The catalysed reaction is 3-O-{beta-D-GlcA-(1-&gt;[3)-alpha-D-Xyl-(1-&gt;3)-beta-D-GlcA-(1-&gt;](n)-4)-beta-D-Xyl-(1-&gt;4)-Rib-ol-P-Rib-ol-P-3-beta-D-GalNAc-(1-&gt;3)-beta-D-GlcNAc-(1-&gt;4)-O-6-P-alpha-D-Man}-L-Thr-[protein] + UDP-alpha-D-xylose = 3-O-{(1-&gt;[3)-alpha-D-Xyl-(1-&gt;3)-beta-D-GlcA-(1-&gt;](n+1)-4)-beta-D-Xyl-(1-&gt;4)-Rib-ol-P-Rib-ol-P-3-beta-D-GalNAc-(1-&gt;3)-beta-D-GlcNAc-(1-&gt;4)-O-6-P-alpha-D-Man}-L-Thr-[protein] + UDP + H(+). The protein operates within protein modification; protein glycosylation. Bifunctional glycosyltransferase with both alpha-1,3-xylosyltransferase and beta-1,3-glucuronyltransferase activities involved in the maturation of alpha-dystroglycan (DAG1) by glycosylation leading to DAG1 binding to laminin G-like domain-containing extracellular proteins with high affinity. Elongates the glucuronyl-beta-1,4-xylose-beta disaccharide primer structure initiated by B4GAT1 by adding repeating units [-3-Xylose-alpha-1,3-GlcA-beta-1-] to produce a heteropolysaccharide. Requires the phosphorylation of core M3 (O-mannosyl trisaccharide) by POMK to elongate the glucuronyl-beta-1,4-xylose-beta disaccharide primer. Plays a key role in skeletal muscle function and regeneration. This is Xylosyl- and glucuronyltransferase LARGE1 from Mus musculus (Mouse).